Here is a 104-residue protein sequence, read N- to C-terminus: NADH-quinone oxidoreductase subunit K (104 aa).

A run of 3 helical transmembrane segments spans residues 4–24 (VPAS…LFGA), 31–51 (VIVL…LVAF), and 67–87 (LFTM…LIAL).

Belongs to the complex I subunit 4L family. NDH-1 is composed of 14 different subunits. Subunits NuoA, H, J, K, L, M, N constitute the membrane sector of the complex.

The protein localises to the cell membrane. The catalysed reaction is a quinone + NADH + 5 H(+)(in) = a quinol + NAD(+) + 4 H(+)(out). In terms of biological role, NDH-1 shuttles electrons from NADH, via FMN and iron-sulfur (Fe-S) centers, to quinones in the respiratory chain. The immediate electron acceptor for the enzyme in this species is believed to be a menaquinone. Couples the redox reaction to proton translocation (for every two electrons transferred, four hydrogen ions are translocated across the cytoplasmic membrane), and thus conserves the redox energy in a proton gradient. The chain is NADH-quinone oxidoreductase subunit K from Bacillus cereus (strain G9842).